The sequence spans 308 residues: Dual oxidase maturation factor 1 (308 aa).

At 1–21 (MQANIFPFYPQPRTSFKFDTK) the chain is on the extracellular side. Residues 22 to 42 (IIEIIIICIVTACTFIIILPG) traverse the membrane as a helical segment. Topologically, residues 43-49 (IRGKSRS) are cytoplasmic. The chain crosses the membrane as a helical span at residues 50–70 (IWLFRILTSLFIGAVILAVNF). Over 71-172 (TSDWETGIVT…SPCGLFQQYC (102 aa)) the chain is Extracellular. Asn-94, Asn-107, and Asn-119 each carry an N-linked (GlcNAc...) asparagine glycan. A helical transmembrane segment spans residues 173-195 (ISTYYSSEIMWVAFGSWILYNVL). Residues 196 to 199 (FSMP) are Cytoplasmic-facing. A helical membrane pass occupies residues 200-220 (VILYGICMMFVTAICMLVSLI). Residues 221–247 (SFASVRQAPVCNIHFGNAVLKTHFGVS) lie on the Extracellular side of the membrane. Residues 248 to 268 (YWLSLVTGLFCLIVSLVLLFL) traverse the membrane as a helical segment. Residues 269–308 (YKTQPKVIRLIFSYGEEEDLSDKSENEEEHSSALSLNEML) are Cytoplasmic-facing.

Belongs to the DUOXA family.

It localises to the membrane. In terms of biological role, possible role in maturation and transport from the endoplasmic reticulum to the plasma membrane of functional dual oxidase. The chain is Dual oxidase maturation factor 1 (duoxa1) from Xenopus tropicalis (Western clawed frog).